Here is a 130-residue protein sequence, read N- to C-terminus: Small ribosomal subunit protein uS8 (130 aa).

The protein belongs to the universal ribosomal protein uS8 family. In terms of assembly, part of the 30S ribosomal subunit.

One of the primary rRNA binding proteins, it binds directly to 16S rRNA central domain where it helps coordinate assembly of the platform of the 30S subunit. The polypeptide is Small ribosomal subunit protein uS8 (Thermococcus kodakarensis (strain ATCC BAA-918 / JCM 12380 / KOD1) (Pyrococcus kodakaraensis (strain KOD1))).